Reading from the N-terminus, the 380-residue chain is MADPKFQNLPGIAYDQPDVYETPDDPELDTSDYYEEEPENEAIERLHISPSVAHKRFSGATVEGSVDFTDRIGRRMCRGYDTRGSSDYELVGQGEKETPVQKCQRLQIEMNELLNEVAALQVDRKVADEEKQSYDAVATVISTARKVLESLKLEQVLGKEQTPGSKQVKALISQVEEFKQSGVLTAIPTPGTDLAATARVASLEQRISQLEKVLGAQPDKLSRLTAATNTTNVLEAVRHLSTKAALIQPDKLDTIEQRLTSLAGKMDAIAEKSSGSAQDAKRDQKITELYDIAKRTEPVVEILPHVIERMQALEALHKYANNFAKIIAEIEQKQGTITTSLVNNKELLHSVQETFAQNLETINSKVAKVEQRVAAISSAK.

Positions 1–32 (MADPKFQNLPGIAYDQPDVYETPDDPELDTSD) are disordered. The span at 21–32 (ETPDDPELDTSD) shows a compositional bias: acidic residues. Residues serine 49, serine 58, and serine 86 each carry the phosphoserine modification. Coiled-coil stretches lie at residues 100–135 (VQKCQRLQIEMNELLNEVAALQVDRKVADEEKQSYD) and 353–377 (ETFAQNLETINSKVAKVEQRVAAIS).

Belongs to the dynactin subunit 2 family. In terms of assembly, subunit of dynactin, a multiprotein complex associated with dynein.

The protein localises to the cytoplasm. Its subcellular location is the cytoskeleton. The protein resides in the membrane. Functionally, modulates cytoplasmic dynein binding to an organelle, and plays a role in prometaphase chromosome alignment and spindle organization during mitosis. May play a role in synapse formation during brain development. The protein is Dynactin subunit 2 of Drosophila melanogaster (Fruit fly).